The sequence spans 1813 residues: U3 small nucleolar RNA-associated protein 10 (1813 aa).

HEAT repeat units lie at residues 245–283, 389–427, 428–464, 584–621, and 659–695; these read DVLI…KASL, SETI…LQFN, ESDT…DIMP, ADMQ…LASK, and IIHH…QDDS. 2 disordered regions span residues 686–705 and 887–912; these read IRGP…STGV and DLGS…SSMD. Residues 690–705 are compositionally biased toward basic and acidic residues; the sequence is RSQDDSDRTRSESTGV. 7 HEAT repeats span residues 1058–1095, 1189–1228, 1265–1302, 1309–1347, 1398–1437, 1678–1715, and 1769–1806; these read QTID…AFEH, KIAV…KAHG, LSLV…SSND, ARVL…KYGK, EALP…HVPW, LASI…LAVA, and ALLP…ILGE.

Belongs to the HEATR1/UTP10 family. Component of the ribosomal small subunit (SSU) processome.

Its subcellular location is the nucleus. It is found in the nucleolus. Involved in nucleolar processing of pre-18S ribosomal RNA. Involved in ribosome biosynthesis. This chain is U3 small nucleolar RNA-associated protein 10, found in Coccidioides immitis (strain RS) (Valley fever fungus).